We begin with the raw amino-acid sequence, 287 residues long: ATP synthase gamma chain (287 aa).

The protein belongs to the ATPase gamma chain family. F-type ATPases have 2 components, CF(1) - the catalytic core - and CF(0) - the membrane proton channel. CF(1) has five subunits: alpha(3), beta(3), gamma(1), delta(1), epsilon(1). CF(0) has three main subunits: a, b and c.

The protein localises to the cell inner membrane. Functionally, produces ATP from ADP in the presence of a proton gradient across the membrane. The gamma chain is believed to be important in regulating ATPase activity and the flow of protons through the CF(0) complex. This chain is ATP synthase gamma chain, found in Escherichia coli (strain 55989 / EAEC).